The chain runs to 339 residues: Aspartate carbamoyltransferase catalytic subunit (339 aa).

Carbamoyl phosphate-binding residues include Arg69 and Thr70. Lys97 lines the L-aspartate pocket. Carbamoyl phosphate contacts are provided by Arg119, His149, and Gln152. L-aspartate contacts are provided by Arg182 and Arg237. Residues Gly278 and Pro279 each coordinate carbamoyl phosphate.

Belongs to the aspartate/ornithine carbamoyltransferase superfamily. ATCase family. Heterododecamer (2C3:3R2) of six catalytic PyrB chains organized as two trimers (C3), and six regulatory PyrI chains organized as three dimers (R2).

It catalyses the reaction carbamoyl phosphate + L-aspartate = N-carbamoyl-L-aspartate + phosphate + H(+). It functions in the pathway pyrimidine metabolism; UMP biosynthesis via de novo pathway; (S)-dihydroorotate from bicarbonate: step 2/3. Functionally, catalyzes the condensation of carbamoyl phosphate and aspartate to form carbamoyl aspartate and inorganic phosphate, the committed step in the de novo pyrimidine nucleotide biosynthesis pathway. This is Aspartate carbamoyltransferase catalytic subunit from Hydrogenovibrio crunogenus (strain DSM 25203 / XCL-2) (Thiomicrospira crunogena).